A 363-amino-acid chain; its full sequence is NAD(P)H-quinone oxidoreductase subunit 1, chloroplastic (363 aa).

A run of 6 helical transmembrane segments spans residues 26 to 46, 98 to 118, 127 to 147, 253 to 273, 300 to 320, and 336 to 356; these read IIWV…GVLV, FSIG…VIPF, LSIG…GLLM, FGLF…FVTV, VFGT…FLFI, and LLNL…LLTT.

It belongs to the complex I subunit 1 family. As to quaternary structure, NDH is composed of at least 16 different subunits, 5 of which are encoded in the nucleus.

It localises to the plastid. Its subcellular location is the chloroplast thylakoid membrane. It catalyses the reaction a plastoquinone + NADH + (n+1) H(+)(in) = a plastoquinol + NAD(+) + n H(+)(out). The enzyme catalyses a plastoquinone + NADPH + (n+1) H(+)(in) = a plastoquinol + NADP(+) + n H(+)(out). NDH shuttles electrons from NAD(P)H:plastoquinone, via FMN and iron-sulfur (Fe-S) centers, to quinones in the photosynthetic chain and possibly in a chloroplast respiratory chain. The immediate electron acceptor for the enzyme in this species is believed to be plastoquinone. Couples the redox reaction to proton translocation, and thus conserves the redox energy in a proton gradient. The polypeptide is NAD(P)H-quinone oxidoreductase subunit 1, chloroplastic (Helianthus annuus (Common sunflower)).